Reading from the N-terminus, the 144-residue chain is Prefoldin subunit alpha (144 aa).

This sequence belongs to the prefoldin subunit alpha family. As to quaternary structure, heterohexamer of two alpha and four beta subunits.

It is found in the cytoplasm. In terms of biological role, molecular chaperone capable of stabilizing a range of proteins. Seems to fulfill an ATP-independent, HSP70-like function in archaeal de novo protein folding. The chain is Prefoldin subunit alpha from Methanosarcina barkeri (strain Fusaro / DSM 804).